We begin with the raw amino-acid sequence, 150 residues long: Endoribonuclease YbeY (150 aa).

3 residues coordinate Zn(2+): His112, His116, and His122.

It belongs to the endoribonuclease YbeY family. It depends on Zn(2+) as a cofactor.

It localises to the cytoplasm. Its function is as follows. Single strand-specific metallo-endoribonuclease involved in late-stage 70S ribosome quality control and in maturation of the 3' terminus of the 16S rRNA. The sequence is that of Endoribonuclease YbeY from Geobacter sulfurreducens (strain ATCC 51573 / DSM 12127 / PCA).